Here is a 488-residue protein sequence, read N- to C-terminus: Adenylosuccinate synthetase 1, chloroplastic (488 aa).

The transit peptide at 1 to 47 directs the protein to the chloroplast; that stretch reads MSLSTVNHAAAAAAAAAGPGKSFSAAAPAAPSVRLPRTRAPAAAAVS. GTP contacts are provided by residues 75–81 and 103–105; these read GDEGKGK and GHT. The active-site Proton acceptor is the Asp-76. Mg(2+) contacts are provided by Asp-76 and Gly-103. Residues 76–79, 101–104, Thr-193, Arg-207, Gln-287, Thr-302, and Arg-366 contribute to the IMP site; these read DEGK and NAGH. His-104 serves as the catalytic Proton donor. 362-368 lines the substrate pocket; it reads TTTGRPR. Residues Arg-368, 394 to 396, and 477 to 479 contribute to the GTP site; these read KLD and GVG.

This sequence belongs to the adenylosuccinate synthetase family. As to quaternary structure, homodimer. Requires Mg(2+) as cofactor.

The protein localises to the plastid. The protein resides in the chloroplast. The enzyme catalyses IMP + L-aspartate + GTP = N(6)-(1,2-dicarboxyethyl)-AMP + GDP + phosphate + 2 H(+). The protein operates within purine metabolism; AMP biosynthesis via de novo pathway; AMP from IMP: step 1/2. Plays an important role in the de novo pathway and in the salvage pathway of purine nucleotide biosynthesis. Catalyzes the first committed step in the biosynthesis of AMP from IMP. In Oryza sativa subsp. japonica (Rice), this protein is Adenylosuccinate synthetase 1, chloroplastic.